We begin with the raw amino-acid sequence, 694 residues long: Probable metal-nicotianamine transporter YSL8 (694 aa).

The next 14 helical transmembrane spans lie at Ile-38–Met-58, Leu-62–Met-82, Cys-110–Met-130, Leu-154–Pro-174, Ile-215–Ala-235, Val-265–Val-285, Val-319–Leu-339, Ile-393–Phe-413, Val-421–Leu-441, Gly-467–Ser-487, Met-506–Trp-526, Leu-567–Ala-587, Phe-608–Trp-628, and Val-643–Leu-663.

The protein belongs to the YSL (TC 2.A.67.2) family. As to expression, expressed in root epidermis and exoderm.

The protein resides in the membrane. May be involved in the transport of nicotianamine-chelated metals. This chain is Probable metal-nicotianamine transporter YSL8 (YSL8), found in Oryza sativa subsp. japonica (Rice).